The sequence spans 586 residues: Kelch-like protein 7 (586 aa).

In terms of domain architecture, BTB spans 44-111 (CDVILMVQER…AYTARISVNS (68 aa)). In terms of domain architecture, BACK spans 146–248 (CLGISVLAEC…SKNFLSKTVQ (103 aa)). 6 Kelch repeats span residues 294 to 336 (RIAL…FWDN), 337 to 382 (VVYI…AAEG), 383 to 430 (KIYT…EANG), 431 to 481 (LIYV…FVKD), 483 to 528 (IFAV…AVGS), and 530 to 575 (IYVL…CVVD).

In terms of assembly, homodimer. Component of the BCR(KLHL7) E3 ubiquitin ligase complex, at least composed of CUL3 and KLHL7 and RBX1.

The protein localises to the nucleus. Its subcellular location is the cytoplasm. The protein operates within protein modification; protein ubiquitination. Functionally, substrate-specific adapter of a BCR (BTB-CUL3-RBX1) E3 ubiquitin ligase complex. The BCR(KLHL7) complex acts by mediating ubiquitination and subsequent degradation of substrate proteins. Probably mediates 'Lys-48'-linked ubiquitination. This is Kelch-like protein 7 (Klhl7) from Rattus norvegicus (Rat).